The chain runs to 92 residues: MARSLKKGPFADDHLLKKVQAIIDGKAPKKPIKTWSRRSTIFPDFVGLTFAVHNGKQFIEVYVTDDMVGHKLGEFSPTRTFSGHGADKSKKK.

The protein belongs to the universal ribosomal protein uS19 family.

Functionally, protein S19 forms a complex with S13 that binds strongly to the 16S ribosomal RNA. This is Small ribosomal subunit protein uS19 from Mycoplasmopsis synoviae (strain 53) (Mycoplasma synoviae).